Consider the following 328-residue polypeptide: Acyl-CoA wax alcohol acyltransferase 1 (328 aa).

The next 2 membrane-spanning stretches (helical) occupy residues 12-32 (SLMLLQWPLSYLAIFWILQPL) and 34-53 (VYLLFTSLWPLPVLYFAWLF).

Belongs to the diacylglycerol acyltransferase family. As to expression, predominantly expressed in skin, where it is limited to the sebaceous gland. Expressed in more mature, centrally located cells just before their rupture and sebum release. Also expressed in all tissues except spleen. Expressed at higher level in thymus, prostate and testis.

It is found in the endoplasmic reticulum membrane. The enzyme catalyses a long chain fatty alcohol + a fatty acyl-CoA = a wax ester + CoA. It carries out the reaction 1,2-di-(9Z-octadecenoyl)-sn-glycerol + (9Z)-octadecenoyl-CoA = 1,2,3-tri-(9Z-octadecenoyl)-glycerol + CoA. It catalyses the reaction hexadecan-1-ol + (9Z)-octadecenoyl-CoA = hexadecanyl (9Z)-octadecenoate + CoA. The catalysed reaction is decan-1-ol + (9Z)-octadecenoyl-CoA = 1-O-decyl-(9Z)-octadecenoate + CoA. The enzyme catalyses (9Z)-hexadecen-1-ol + (9Z)-octadecenoyl-CoA = 1-O-(9Z)-hexadecenyl (9Z)-octadecenoate + CoA. It carries out the reaction octadecan-1-ol + (9Z)-octadecenoyl-CoA = 1-O-octadecyl (9Z)-octadecenoate + CoA. It catalyses the reaction (9Z)-octadecen-1-ol + (9Z)-octadecenoyl-CoA = 1-O-(9Z)-octadecenyl (9Z)-octadecenoate + CoA. The catalysed reaction is hexadecan-1-ol + hexadecanoyl-CoA = hexadecanyl hexadecanoate + CoA. The enzyme catalyses hexadecan-1-ol + (9Z)-hexadecenoyl-CoA = 1-O-hexadecyl (9Z)-hexadecenoate + CoA. It carries out the reaction hexadecan-1-ol + octadecanoyl-CoA = hexadecanyl octadecanoate + CoA. It catalyses the reaction eicosan-1-ol + (9Z)-octadecenoyl-CoA = 1-O-eicosanyl (9Z)-octadecenoate + CoA. In terms of biological role, acyltransferase that catalyzes the formation of ester bonds between fatty alcohols and fatty acyl-CoAs to form wax monoesters. Shows a strong preference for decyl alcohol (C10), with less activity towards C16 and C18 alcohols. Shows a strong preference for saturated acyl-CoAs. The chain is Acyl-CoA wax alcohol acyltransferase 1 (AWAT1) from Homo sapiens (Human).